Consider the following 539-residue polypeptide: Chaperonin GroEL (539 aa).

Residues 29–32, 86–90, Gly413, 476–478, and Asp492 each bind ATP; these read TIGP, DGTTT, and NAA.

Belongs to the chaperonin (HSP60) family. As to quaternary structure, forms a cylinder of 14 subunits composed of two heptameric rings stacked back-to-back. Interacts with the co-chaperonin GroES.

The protein localises to the cytoplasm. The catalysed reaction is ATP + H2O + a folded polypeptide = ADP + phosphate + an unfolded polypeptide.. Functionally, together with its co-chaperonin GroES, plays an essential role in assisting protein folding. The GroEL-GroES system forms a nano-cage that allows encapsulation of the non-native substrate proteins and provides a physical environment optimized to promote and accelerate protein folding. This is Chaperonin GroEL from Leuconostoc mesenteroides subsp. mesenteroides (strain ATCC 8293 / DSM 20343 / BCRC 11652 / CCM 1803 / JCM 6124 / NCDO 523 / NBRC 100496 / NCIMB 8023 / NCTC 12954 / NRRL B-1118 / 37Y).